Here is a 4377-residue protein sequence, read N- to C-terminus: Ankyrin-3 (4377 aa).

The segment at 1-44 (MAHAASQLKKNRDLEINAEEEPEKKRKHRKRSRDRKKKSDANAS) is disordered. Over residues 25–38 (KRKHRKRSRDRKKK) the composition is skewed to basic residues. At S39 the chain carries Phosphoserine. ANK repeat units lie at residues 73–102 (NGLN…NVDA), 106–135 (KGNT…NVNA), 139–168 (NGFT…SQSL), 172–201 (DGFT…KGKV), 203–230 (LPAL…NADV), 234–263 (SGFT…AVDF), 267–296 (NDIT…KIDA), 300–329 (DGLT…PILS), 333–362 (NGLS…PVDD), 366–395 (DYLT…NPNA), 399–428 (NGFT…SIQA), 432–461 (SGLT…SPNT), 465–494 (RGET…QVEA), 498–527 (DDQT…SPNA), 531–560 (SGYT…SLSI), 564–593 (KGFT…SPDA), 597–626 (SGLT…SPHA), 630–659 (NGYT…DANA), 663–692 (QGIA…NVNL), 696–725 (SGLT…HVDA), 729–758 (MGYT…KVNA), 762–791 (NGYT…SPNE), and 795–825 (NGNT…TMTT). At T468 the chain carries Phosphoserine. Phosphoserine is present on S623. 2 positions are modified to phosphoserine: T765 and E791. A phosphoserine mark is found at S847, S861, S867, S913, S916, S922, S957, S959, and S1113. ZU5 domains follow at residues 984–1139 (FLVS…VVSR) and 1141–1288 (KQES…LADC). Positions 1273 to 1407 (VSFTTNVSAR…SIKIRDTSQE (135 aa)) are UPA domain. S1445, S1459, and S1470 each carry phosphoserine. The span at 1519-1539 (SGFTSLSSSSSNTPSASPLKS) shows a compositional bias: low complexity. The disordered stretch occupies residues 1519-1540 (SGFTSLSSSSSNTPSASPLKSI). 9 positions are modified to phosphoserine: S1622, S1625, S1632, I1651, L1658, S1984, S2111, S2123, and S2126. 15 disordered regions span residues 1968–1987 (VDNK…SPED), 2107–2159 (TILE…VPIP), 2176–2245 (YDPS…EETH), 2299–2322 (AVSP…DNQM), 2383–2433 (FPCS…ISDD), 2474–2508 (DVSH…KIAT), 2588–2751 (LTEV…VKKI), 2795–2824 (QSNE…MPDS), 3036–3067 (PPLE…DVFD), 3131–3272 (TFYT…KKHH), 3298–3516 (PVIR…SVFP), 3538–3607 (KGLD…HEGK), 3635–3718 (GEHT…DPKL), 3868–3897 (KATS…QSEK), and 4019–4090 (KKMQ…CERT). Residues 1977–1986 (PKSDKGHSPE) show a composition bias toward basic and acidic residues. A compositionally biased stretch (basic and acidic residues) spans 2115–2136 (FSQHDQDKSPLSDSGFETRSEK). A compositionally biased stretch (polar residues) spans 2137–2146 (TPSAPQSAES). The span at 2299–2308 (AVSPDVHKSA) shows a compositional bias: basic and acidic residues. The segment covering 2390–2399 (GQQEEEELTA) has biased composition (acidic residues). A compositionally biased stretch (polar residues) spans 2407-2417 (LESSRVNTPVS). Basic and acidic residues-rich tracts occupy residues 2497–2508 (GSDKRSREKIAT) and 2588–2612 (LTEV…PEKK). A compositionally biased stretch (low complexity) spans 2622-2631 (SSQSPTSSSP). Over residues 2706 to 2716 (SGFQLKQSKLS) the composition is skewed to polar residues. Positions 2720 to 2742 (LKFEQGTHAKSKDMSQEDRKSDG) are enriched in basic and acidic residues. The segment covering 2796–2807 (SNEIVVNDSGSD) has biased composition (polar residues). Polar residues-rich tracts occupy residues 3154 to 3186 (EQVS…SKTP) and 3214 to 3224 (KSTSLKQTTVE). Basic and acidic residues-rich tracts occupy residues 3227–3242 (AVER…DSNQ) and 3335–3361 (KLKE…KELE). The span at 3377–3402 (SPQNEIAQNGNNDQSITECSIATTAE) shows a compositional bias: polar residues. A compositionally biased stretch (acidic residues) spans 3409 to 3428 (ATEIDSLDGYDLQDEDDGLT). 2 stretches are compositionally biased toward basic and acidic residues: residues 3465-3481 (EVIE…DKPP) and 3549-3575 (RGDD…EDRS). Residues 3576–3598 (PATTPDTTPARTPTDESTPTSEP) show a composition bias toward low complexity. The segment covering 3637-3651 (HTSEGKSGDQGEGDK) has biased composition (basic and acidic residues). Polar residues-rich tracts occupy residues 3654–3669 (VTAT…TVET), 3676–3713 (ETPT…NTSK), 3880–3897 (HMSN…QSEK), and 4033–4052 (SRNT…VTTK). Residues 4053–4076 (SARDKKTEAAPLKSKSEKAGSEKR) show a composition bias toward basic and acidic residues. A Death domain is found at 4090 to 4174 (TDIRMAIVAD…DIVTLLEGPI (85 aa)). 2 positions are modified to phosphoserine: S4211 and S4229. Disordered stretches follow at residues 4251-4298 (NGSH…EPAS) and 4323-4377 (PVSM…KSHS). Polar residues predominate over residues 4268 to 4277 (PESQNDVGKQ). Phosphoserine is present on residues S4290 and S4298. The segment covering 4337-4347 (GKPRLSLHEEE) has biased composition (basic and acidic residues). The residue at position 4350 (S4350) is a Phosphoserine. Over residues 4362–4377 (VKTKKEIRHVEKKSHS) the composition is skewed to basic residues.

Directly interacts with DMD and betaDAG1. This interaction does not interfere with binding between DMD and betaDAG1. It is also required for DMD and betaDAG1 retention at costameres. Interacts (via N-terminal ANK repeats) with SCHIP1 isoform 5 (via C-terminus); this interaction is required for the localization at axon initial segments (AISs) and nodes of Ranvier (NRs). May be a constituent of a NFASC/NRCAM/ankyrin G complex. Interacts with RHBG. Interacts with PLEC and FLNC. Interacts with KCNA1; this inhibits channel activity. Interacts (via ANK repeats) with IQCJ-SCHIP1; required for IQCJ-SCHIP1 localization at axon initial segments (AIS) and nodes of Ranvier. Interacts with SCHIP1. Interacts with SCN5A. Interacts with PKP2 and GJA1/CX43. In terms of tissue distribution, expressed in brain, neurons, muscles and other tissues.

Its subcellular location is the cytoplasm. The protein resides in the cytoskeleton. It is found in the cell projection. The protein localises to the axon. It localises to the cell membrane. Its subcellular location is the sarcolemma. The protein resides in the postsynaptic cell membrane. It is found in the lysosome. The protein localises to the T-tubule. It localises to the golgi apparatus. Its function is as follows. Membrane-cytoskeleton linker. May participate in the maintenance/targeting of ion channels and cell adhesion molecules at the nodes of Ranvier and axonal initial segments. In skeletal muscle, required for costamere localization of DMD and betaDAG1. Regulates KCNA1 channel activity in function of dietary Mg(2+) levels, and thereby contributes to the regulation of renal Mg(2+) reabsorption. Required for intracellular adhesion and junctional conductance in myocytes, potentially via stabilization of GJA1/CX43 protein abundance and promotion of PKP2, GJA1/CX43, and SCN5A/Nav1.5 localization to cell-cell junctions. In terms of biological role, may be part of a Golgi-specific membrane cytoskeleton in association with beta-spectrin. The chain is Ankyrin-3 from Homo sapiens (Human).